A 361-amino-acid polypeptide reads, in one-letter code: UDP-3-O-acylglucosamine N-acyltransferase (361 aa).

His253 acts as the Proton acceptor in catalysis.

This sequence belongs to the transferase hexapeptide repeat family. LpxD subfamily. In terms of assembly, homotrimer.

The enzyme catalyses a UDP-3-O-[(3R)-3-hydroxyacyl]-alpha-D-glucosamine + a (3R)-hydroxyacyl-[ACP] = a UDP-2-N,3-O-bis[(3R)-3-hydroxyacyl]-alpha-D-glucosamine + holo-[ACP] + H(+). Its pathway is bacterial outer membrane biogenesis; LPS lipid A biosynthesis. Its function is as follows. Catalyzes the N-acylation of UDP-3-O-acylglucosamine using 3-hydroxyacyl-ACP as the acyl donor. Is involved in the biosynthesis of lipid A, a phosphorylated glycolipid that anchors the lipopolysaccharide to the outer membrane of the cell. The polypeptide is UDP-3-O-acylglucosamine N-acyltransferase (Burkholderia mallei (strain ATCC 23344)).